We begin with the raw amino-acid sequence, 1071 residues long: Intracellular phospholipase A2 (1071 aa).

The segment at 1 to 22 (MTTTNKDGPFRQQYLPGVHKEP) is disordered. ANK repeat units follow at residues 411–440 (ENCY…TLFC), 479–508 (DGQS…KFTR), 510–539 (DRNE…EIAN), 544–570 (LGNS…ELGL), 578–610 (AGET…NMNA), 614–651 (HGNT…KINL), and 652–681 (RGES…TRCP). One can recognise a PNPLA domain in the interval 748–921 (ISMDGGGIRG…ISNNPALDLM (174 aa)). Positions 752–757 (GGGIRG) match the GXGXXG motif. The GXSXG signature appears at 784–788 (GTSTG). Catalysis depends on Ser786, which acts as the Nucleophile. Catalysis depends on Asp908, which acts as the Proton acceptor. The short motif at 908–910 (DGG) is the DGA/G element.

This sequence belongs to the patatin family.

The catalysed reaction is a 1,2-diacyl-sn-glycero-3-phosphocholine + H2O = a 1-acyl-sn-glycero-3-phosphocholine + a fatty acid + H(+). Phospholipase that plays a critical role during oogenesis, ovulation, and/or embryogenesis. The sequence is that of Intracellular phospholipase A2 from Caenorhabditis elegans.